The primary structure comprises 351 residues: Alcohol dehydrogenase 2 (351 aa).

Zn(2+) contacts are provided by Cys47, His70, Cys101, Cys104, Cys107, Cys115, and Cys157. NAD(+)-binding positions include 181–187, Asp205, Lys209, 271–273, and Arg343; these read GAGGGLG and VGL.

This sequence belongs to the zinc-containing alcohol dehydrogenase family. In terms of assembly, homotetramer. Zn(2+) serves as cofactor.

It carries out the reaction a primary alcohol + NAD(+) = an aldehyde + NADH + H(+). The enzyme catalyses a secondary alcohol + NAD(+) = a ketone + NADH + H(+). The polypeptide is Alcohol dehydrogenase 2 (sodh-2) (Caenorhabditis elegans).